Consider the following 179-residue polypeptide: Translation initiation factor IF-3 (179 aa).

This sequence belongs to the IF-3 family. As to quaternary structure, monomer.

The protein resides in the cytoplasm. Functionally, IF-3 binds to the 30S ribosomal subunit and shifts the equilibrium between 70S ribosomes and their 50S and 30S subunits in favor of the free subunits, thus enhancing the availability of 30S subunits on which protein synthesis initiation begins. The polypeptide is Translation initiation factor IF-3 (Lactococcus lactis subsp. lactis (strain IL1403) (Streptococcus lactis)).